Consider the following 460-residue polypeptide: SPbeta prophage-derived uncharacterized protein YopQ (460 aa).

The protein is SPbeta prophage-derived uncharacterized protein YopQ (yopQ) of Bacillus subtilis (strain 168).